The chain runs to 89 residues: Repressor protein (89 aa).

The H-T-H motif DNA-binding region spans 29–52 (SGDIARNTGYSRRRISDRCTVLVD).

Transcriptional repressor expressed under lysogenic conditions, which specifically binds the host DNA site 'RRGAAG'. The binding occurs cooperatively, probably as 2 copies of a dimer. Possibly prevents RNA polymerase access to the promoters for lytic cell cycle transcription. This Halobacterium salinarum (Halobacterium halobium) protein is Repressor protein (T6).